We begin with the raw amino-acid sequence, 393 residues long: 5-amino-6-(D-ribitylamino)uracil--L-tyrosine 4-hydroxyphenyl transferase (393 aa).

One can recognise a Radical SAM core domain in the interval V67 to S322. [4Fe-4S] cluster contacts are provided by C81, C85, and C88.

Belongs to the radical SAM superfamily. CofH family. Consists of two subunits, CofG and CofH. [4Fe-4S] cluster is required as a cofactor.

The enzyme catalyses 5-amino-6-(D-ribitylamino)uracil + L-tyrosine + S-adenosyl-L-methionine = 5-amino-5-(4-hydroxybenzyl)-6-(D-ribitylimino)-5,6-dihydrouracil + 2-iminoacetate + 5'-deoxyadenosine + L-methionine + H(+). It participates in cofactor biosynthesis; coenzyme F0 biosynthesis. Its function is as follows. Catalyzes the radical-mediated synthesis of 5-amino-5-(4-hydroxybenzyl)-6-(D-ribitylimino)-5,6-dihydrouracil from 5-amino-6-(D-ribitylamino)uracil and L-tyrosine. The chain is 5-amino-6-(D-ribitylamino)uracil--L-tyrosine 4-hydroxyphenyl transferase from Thermosynechococcus vestitus (strain NIES-2133 / IAM M-273 / BP-1).